A 315-amino-acid chain; its full sequence is Lipoyl synthase (315 aa).

C62, C67, C73, C88, C92, C95, and S302 together coordinate [4Fe-4S] cluster. The 218-residue stretch at 74–291 (FGKGTATFMI…ETEALRMGFR (218 aa)) folds into the Radical SAM core domain.

The protein belongs to the radical SAM superfamily. Lipoyl synthase family. Requires [4Fe-4S] cluster as cofactor.

The protein localises to the cytoplasm. The enzyme catalyses [[Fe-S] cluster scaffold protein carrying a second [4Fe-4S](2+) cluster] + N(6)-octanoyl-L-lysyl-[protein] + 2 oxidized [2Fe-2S]-[ferredoxin] + 2 S-adenosyl-L-methionine + 4 H(+) = [[Fe-S] cluster scaffold protein] + N(6)-[(R)-dihydrolipoyl]-L-lysyl-[protein] + 4 Fe(3+) + 2 hydrogen sulfide + 2 5'-deoxyadenosine + 2 L-methionine + 2 reduced [2Fe-2S]-[ferredoxin]. Its pathway is protein modification; protein lipoylation via endogenous pathway; protein N(6)-(lipoyl)lysine from octanoyl-[acyl-carrier-protein]: step 2/2. In terms of biological role, catalyzes the radical-mediated insertion of two sulfur atoms into the C-6 and C-8 positions of the octanoyl moiety bound to the lipoyl domains of lipoate-dependent enzymes, thereby converting the octanoylated domains into lipoylated derivatives. The polypeptide is Lipoyl synthase (Azoarcus sp. (strain BH72)).